The following is a 497-amino-acid chain: Tyrosine-protein kinase SPK-1 (497 aa).

Residues 1–25 (MGQKFSIKCKKQSKNKNTSKCQKIP) are disordered. Residues 33 to 94 (PGSYMVKAKY…PSNYVSKQDG (62 aa)) form the SH3 domain. Residues 100–200 (EAWREIQRWE…NTHIPLTDPM (101 aa)) form the SH2 domain. A Protein kinase domain is found at 220 to 482 (IEILNEIGRG…LVLQEKMDLL (263 aa)). Residues 226–234 (IGRGFFGSV) and Lys248 contribute to the ATP site. Residue Asp342 is the Proton acceptor of the active site.

The protein belongs to the protein kinase superfamily. Tyr protein kinase family.

The catalysed reaction is L-tyrosyl-[protein] + ATP = O-phospho-L-tyrosyl-[protein] + ADP + H(+). In Girardia tigrina (Planarian), this protein is Tyrosine-protein kinase SPK-1.